The following is a 412-amino-acid chain: DnaJ homolog subfamily A member 2 (412 aa).

Residues 8 to 70 (KLYDILGVPP…EKRELYDRYG (63 aa)) form the J domain. At K39 the chain carries N6-acetyllysine. A phosphoserine mark is found at S78 and S123. The CR-type zinc-finger motif lies at 130–214 (GKTTKLQLSK…CEGKKVIKEV (85 aa)). Residue K134 forms a Glycyl lysine isopeptide (Lys-Gly) (interchain with G-Cter in SUMO2) linkage. Residues C143 and C146 each contribute to the Zn(2+) site. The stretch at 143-150 (CSACSGQG) is one CXXCXGXG motif repeat. K152 is subject to N6-acetyllysine. C159, C162, C186, C189, C202, and C205 together coordinate Zn(2+). 3 CXXCXGXG motif repeats span residues 159–166 (CSACRGRG), 186–193 (CSDCNGEG), and 202–209 (CKKCEGKK). Residues 365-412 (IGETEEVELQEFDSTRGSGGGQRREAYNDSSDEESSSHHGPGVQCAHQ) form a disordered region. Y391 bears the Phosphotyrosine mark. 2 positions are modified to phosphoserine: S394 and S395. C409 carries the post-translational modification Cysteine methyl ester. C409 carries S-farnesyl cysteine lipidation. Positions 410 to 412 (AHQ) are cleaved as a propeptide — removed in mature form.

The protein localises to the membrane. In terms of biological role, co-chaperone of Hsc70. Stimulates ATP hydrolysis and the folding of unfolded proteins mediated by HSPA1A/B (in vitro). This is DnaJ homolog subfamily A member 2 (Dnaja2) from Mus musculus (Mouse).